Consider the following 457-residue polypeptide: Glycine receptor subunit alpha-1 (457 aa).

The N-terminal stretch at 1–28 (MYSFNTLRLYLWETIVFFSLAASKEAEA) is a signal peptide. At 29-250 (ARSASKPMSP…RFHLERQMGY (222 aa)) the chain is on the extracellular side. Asparagine 66 carries N-linked (GlcNAc...) asparagine glycosylation. Residues arginine 93 and serine 157 each contribute to the glycine site. Cysteine 166 and cysteine 180 are disulfide-bonded. 2 residues coordinate Zn(2+): glutamate 220 and aspartate 222. A disulfide bridge connects residues cysteine 226 and cysteine 237. Residue 230 to 235 (YNTGKF) participates in strychnine binding. Threonine 232 is a glycine binding site. Histidine 243 contacts Zn(2+). A helical transmembrane segment spans residues 251–272 (YLIQMYIPSLLIVILSWISFWI). The Cytoplasmic portion of the chain corresponds to 273–277 (NMDAA). Residues 278 to 298 (PARVGLGITTVLTMTTQSSGS) form a helical membrane-spanning segment. At 299-309 (RASLPKVSYVK) the chain is on the extracellular side. The helical transmembrane segment at 310–330 (AIDIWMAVCLLFVFSALLEYA) threads the bilayer. The Cytoplasmic portion of the chain corresponds to 331–425 (AVNFVSRQHK…FIQRAKKIDK (95 aa)). Positions 391–410 (KGANNSNTTNPPPAPSKSPE) are disordered. The helical transmembrane segment at 426–446 (ISRIGFPMAFLIFNMFYWIIY) threads the bilayer. Residues 447 to 457 (KIVRREDVHNQ) lie on the Extracellular side of the membrane.

The protein belongs to the ligand-gated ion channel (TC 1.A.9) family. Glycine receptor (TC 1.A.9.3) subfamily. GLRA1 sub-subfamily. Interacts with GLRB to form heteropentameric channels; this is probably the predominant form in vivo. Heteropentamer composed of four GLRA1 subunits and one GLRB subunit. Heteropentamer composed of two GLRA1 and three GLRB. Heteropentamer composed of three GLRA1 and two GLRB. Homopentamer (in vitro). Both homopentamers and heteropentamers form functional ion channels, but their characteristics are subtly different. As to expression, detected on spinal cord neurons (at protein level). Detected in spinal cord.

The protein localises to the postsynaptic cell membrane. Its subcellular location is the synapse. It localises to the perikaryon. The protein resides in the cell projection. It is found in the dendrite. The protein localises to the cell membrane. The enzyme catalyses chloride(in) = chloride(out). With respect to regulation, channel opening is triggered by extracellular glycine. Channel characteristics depend on the subunit composition; heteropentameric channels are activated by lower glycine levels and display faster desensitization. Subunit of heteromeric glycine-gated chloride channels. Plays an important role in the down-regulation of neuronal excitability. Contributes to the generation of inhibitory postsynaptic currents. Channel activity is potentiated by ethanol. Potentiation of channel activity by intoxicating levels of ethanol contribute to the sedative effects of ethanol. The protein is Glycine receptor subunit alpha-1 (GLRA1) of Bos taurus (Bovine).